The chain runs to 320 residues: BTB and MATH domain-containing protein 36 (320 aa).

The region spanning 7–136 (KGSIRFEIQN…DKHAVLEVQI (130 aa)) is the MATH domain. Residues 160–227 (TDVVLVLEGK…IYPTHMLINS (68 aa)) form the BTB domain.

This is BTB and MATH domain-containing protein 36 (bath-36) from Caenorhabditis elegans.